A 178-amino-acid chain; its full sequence is 5,6,7,8-tetrahydromethanopterin hydro-lyase (178 aa).

The Proton donor role is filled by histidine 33. Residues aspartate 35, leucine 64, lysine 82, threonine 84, and glutamine 99 each coordinate substrate.

Belongs to the formaldehyde-activating enzyme family.

It localises to the cytoplasm. The enzyme catalyses 5,6,7,8-tetrahydromethanopterin + formaldehyde = 5,10-methylenetetrahydromethanopterin + H2O. Functionally, catalyzes the condensation of formaldehyde with tetrahydromethanopterin (H(4)MPT) to 5,10-methylenetetrahydromethanopterin. The chain is 5,6,7,8-tetrahydromethanopterin hydro-lyase (faeA) from Methanosarcina barkeri (strain Fusaro / DSM 804).